A 669-amino-acid chain; its full sequence is MSQKETFYITTPIYYPSGKLHIGNSYTTIACDAMARYKRLMGFDVFYLTGVDEHGQKIEKKAAELNVTPKEYVDKMAADVQKLWKTLDISYDKFIRTTDDYHMAAVQQIFDRLVEQGDIYLGEYEGWYSVSDEEFFTETQLAEVYRDDEGNVIGGKAPSGHEVELVKEESYFFRMSKYADRLVQYYEEHPEFIQPESRKNEMLNNFIKPGLEDLAVSRTTFSWGIPLKNDPKHVVYVWIDALSNYITALGYGSEDDSLFQKYWPANVQMVGKEIVRFHTIYWPIMLMALDLPLPKKVFGHGWLLMKDGKMSKSKGNVVYPEMLVERYGLDALRYYLLRAIPFGSDGVFTPEDFVSRLNYDLANDLGNLLNRTIAMINKYCDGKVPAYASKVTPFDSELSTTAANVIGKYHEAMEKMEFNTAIAEIWTLVSRANKYIDETAPWVLAKEEEKRNELESVMIHLAESLRIVAILLQPVMTETPGKIFEQLGLDPETMNMENIHFGEFPTDVTVTSKGTPIFPRLEIETEVTYIQKKMSQSESATEEDIKWNPEETTLVSTKEKQIKYDDFDKVELKVAEVIDCKKVKGADKLLQFRLDAGDENHRQILSGIAEFYPDPAALIGKKVVIVANLKPRKMRGQISQGMILSAESPEGKLQIVEAPKEMPNGAGIA.

The 'HIGH' region signature appears at 14–24; that stretch reads YYPSGKLHIGN. Residue His-161 coordinates Zn(2+). The 'KMSKS' region motif lies at 309–313; sequence KMSKS. Lys-312 contacts ATP. The 104-residue stretch at 566 to 669 folds into the tRNA-binding domain; it reads DFDKVELKVA…KEMPNGAGIA (104 aa).

This sequence belongs to the class-I aminoacyl-tRNA synthetase family. MetG type 2B subfamily. In terms of assembly, homodimer.

It is found in the cytoplasm. The catalysed reaction is tRNA(Met) + L-methionine + ATP = L-methionyl-tRNA(Met) + AMP + diphosphate. Functionally, is required not only for elongation of protein synthesis but also for the initiation of all mRNA translation through initiator tRNA(fMet) aminoacylation. In Enterococcus faecalis (strain ATCC 700802 / V583), this protein is Methionine--tRNA ligase.